The sequence spans 490 residues: MTVAAPAKVEYEAVIGLEVHCQLSTRSKIFSSSATAFGAPPNTQIDPVCMGLPGTLPVLNEKVLEYAVKAGLALNCTIAPYSKFDRKQYFYPDLPKNYQISQYDLPIATHGWVEIQLSDGRSKRIGITRLHIEEDAGKLVHAGSDRLSGSSYSLVDFNRAGVPLIEIVSEPDIRTGEEAAEYVQELRRILRYAGLCDGNLQEGSLRCDVNISVRPLGSPTFGTKVEIKNMNSFNAIQRAIEYEFNRQVKAVEAGEPIVQETRLWEENSQRTISMRKKEGSSDYRYFPEPDLPPIRVTEAQKARWQAELPELPSVKRRRYQQVYGLSVYDSRYLSDERNTAEYFEAVVAAGADPKAAANWMMSDIASYLNTHKLDYPDIALKPETLAELIGLIEQGTISSKIAKEILPELLEKGGSARALVEAKGLTQISDSSLLEPMIAEVLAENPEQLQQYREGKTKLFGYFVGQLMKKTQGRADPKLANELLKRHLDG.

It belongs to the GatB/GatE family. GatB subfamily. In terms of assembly, heterotrimer of A, B and C subunits.

It carries out the reaction L-glutamyl-tRNA(Gln) + L-glutamine + ATP + H2O = L-glutaminyl-tRNA(Gln) + L-glutamate + ADP + phosphate + H(+). The catalysed reaction is L-aspartyl-tRNA(Asn) + L-glutamine + ATP + H2O = L-asparaginyl-tRNA(Asn) + L-glutamate + ADP + phosphate + 2 H(+). Its function is as follows. Allows the formation of correctly charged Asn-tRNA(Asn) or Gln-tRNA(Gln) through the transamidation of misacylated Asp-tRNA(Asn) or Glu-tRNA(Gln) in organisms which lack either or both of asparaginyl-tRNA or glutaminyl-tRNA synthetases. The reaction takes place in the presence of glutamine and ATP through an activated phospho-Asp-tRNA(Asn) or phospho-Glu-tRNA(Gln). This is Aspartyl/glutamyl-tRNA(Asn/Gln) amidotransferase subunit B from Synechococcus sp. (strain JA-3-3Ab) (Cyanobacteria bacterium Yellowstone A-Prime).